Reading from the N-terminus, the 1755-residue chain is MESQQLSQHSPISHGSACASVTSKEVHTNQDPLDVSASKTEECEKASTKANSQQTTTPASSAVPENPHHASPQPASVPPPQNGPYPQQCMMTQNQANPSGWSFYGHPSMIPYTPYQMSPMYFPPGPQSQFPQYPSSVGTPLSTPSPESGNTFTDSSSADSDMTSTKKYVRPPPMLTSPNDFPNWVKTYIKFLQNSNLGGIIPTVNGKPVRQITDDELTFLYNTFQIFAPSQFLPTWVKDILSVDYTDIMKILSKSIEKMQSDTQEANDIVTLANLQYNGSTPADAFETKVTNIIDRLNNNGIHINNKVACQLIMRGLSGEYKFLRYTRHRHLNMTVAELFLDIHAIYEEQQGSRNSKPNYRRNLSDEKNDSRSYTNTTKPKVIARNPQKTNNSKSKTARAHNVSTSNNSPSTDNDSISKSTTEPIQLNNKHDLHLGQELTESTVNHTNHSDDELPGHLLLDSGASRTLIRSAHHIHSASSNPDINVVDAQKRNIPINAIGDLQFHFQDNTKTSIKVLHTPNIAYDLLSLNELAAVDITACFTKNVLERSDGTVLAPIVKYGDFYWVSKKYLLPSNISVPTINNVHTSESTRKYPYPFIHRMLAHANAQTIRYSLKNNTITYFNESDVDWSSAIDYQCPDCLIGKSTKHRHIKGSRLKYQNSYEPFQYLHTDIFGPVHNLPKSAPSYFISFTDETTKFRWVYPLHDRREDSILDVFTTILAFIKNQFQASVLVIQMDRGSEYTNRTLHKFLEKNGITPCYTTTADSRAHGVAERLNRTLLDDCRTQLQCSGLPNHLWFSAIEFSTIVRNSLASPKSKKSARQHAGLAGLDISTLLPFGQPVIVNDHNPNSKIHPRGIPGYALHPSRNSYGYIIYLPSLKKTVDTTNYVILQGKESRLDQFNYDALTFDEDLNRLTASYQSFIASNEIQQSDDLNIESDHDFQSDIELHPEQPRNVLSKAVSPTDSTPPSTHTEDSKRVSKTNIRAPREVDPNISESNILPSKKRSSTPQISNIESTGSGGMHKLNVPLLAPMSQSNTHESSHASKSKDFRHSDSYSENETNHTNVPISSTGGTNNKTVPQISDQETEKRIIHRSPSIDASPPENNSSHNIVPIKTPTTVSEQNTEESIIADLPLPDLPPESPTEFPDPFKELPPINSHQTNSSLGGIGDSNAYTTINSKKRSLEDNETEIKVSRDTWNTKNMRSLEPPRSKKRIHLIAAVKAVKSIKPIRTTLRYDEAITYNKDIKEKEKYIEAYHKEVNQLLKMKTWDTDEYYDRKEIDPKRVINSMFIFNKKRDGTHKARFVARGDIQHPDTYDSGMQSNTVHHYALMTSLSLALDNNYYITQLDISSAYLYADIKEELYIRPPPHLGMNDKLIRLKKSLYGLKQSGANWYETIKSYLIKQCGMEEVRGWSCVFKNSQVTICLFVDDMILFSKDLNANKKIITTLKKQYDTKIINLGESDNEIQYDILGLEIKYQRGKYMKLGMENSLTEKIPKLNVPLNPKGRKLSAPGQPGLYIDQDELEIDEDEYKEKVHEMQKLIGLASYVGYKFRFDLLYYINTLAQHILFPSRQVLDMTYELIQFMWDTRDKQLIWHKNKPTEPDNKLVAISDASYGNQPYYKSQIGNIYLLNGKVIGGKSTKASLTCTSTTEAEIHAISESVPLLNNLSYLIQELNKKPIIKGLLTDSRSTISIIKSTNEEKFRNRFFGTKAMRLRDEVSGNNLYVYYIETKKNIADVMTKPLPIKTFKLLTNKWIH.

Polar residues-rich tracts occupy residues 1-23 (MESQ…SVTS), 48-60 (TKAN…TPAS), and 127-152 (QSQF…GNTF). Disordered stretches follow at residues 1-93 (MESQ…MMTQ), 126-174 (PQSQ…PPPM), and 352-421 (GSRN…SKST). A compositionally biased stretch (low complexity) spans 153 to 165 (TDSSSADSDMTST). The interval 299 to 401 (NNGIHINNKV…NSKSKTARAH (103 aa)) is RNA-binding. Positions 402 to 418 (NVSTSNNSPSTDNDSIS) are enriched in low complexity. Phosphoserine is present on Ser-416. Residue Asp-461 is the For protease activity; shared with dimeric partner of the active site. The tract at residues 583 to 640 (NVHTSESTRKYPYPFIHRMLAHANAQTIRYSLKNNTITYFNESDVDWSSAIDYQCPDC) is integrase-type zinc finger-like. An Integrase catalytic domain is found at 660 to 835 (NSYEPFQYLH…AGLDISTLLP (176 aa)). Mg(2+)-binding residues include Asp-671 and Asp-736. Disordered stretches follow at residues 956-1087 (SKAV…ETEK), 1092-1111 (RSPS…NIVP), and 1130-1171 (DLPL…DSNA). The segment covering 960 to 969 (SPTDSTPPST) has biased composition (low complexity). Positions 1005–1015 (STPQISNIEST) are enriched in polar residues. A compositionally biased stretch (basic and acidic residues) spans 1038–1053 (ESSHASKSKDFRHSDS). Polar residues-rich tracts occupy residues 1054-1082 (YSEN…QISD) and 1101-1111 (PENNSSHNIVP). Residues 1178–1212 (KKRSLEDNETEIKVSRDTWNTKNMRSLEPPRSKKR) carry the Bipartite nuclear localization signal motif. Residues 1338–1476 (NNYYITQLDI…DILGLEIKYQ (139 aa)) form the Reverse transcriptase Ty1/copia-type domain. Residues Asp-1346, Asp-1427, Asp-1428, Asp-1610, Glu-1652, and Asp-1685 each coordinate Mg(2+). An RNase H Ty1/copia-type domain is found at 1610 to 1752 (DASYGNQPYY…IKTFKLLTNK (143 aa)).

As to quaternary structure, the capsid protein forms a homotrimer, from which the VLPs are assembled. The protease is a homodimer, whose active site consists of two apposed aspartic acid residues. Initially, virus-like particles (VLPs) are composed of the structural unprocessed proteins Gag and Gag-Pol, and also contain the host initiator methionine tRNA (tRNA(i)-Met) which serves as a primer for minus-strand DNA synthesis, and a dimer of genomic Ty RNA. Processing of the polyproteins occurs within the particle and proceeds by an ordered pathway, called maturation. First, the protease (PR) is released by autocatalytic cleavage of the Gag-Pol polyprotein yielding capsid protein p45 and a Pol-p154 precursor protein. This cleavage is a prerequisite for subsequent processing of Pol-p154 at the remaining sites to release the mature structural and catalytic proteins. Maturation takes place prior to the RT reaction and is required to produce transposition-competent VLPs.

The protein localises to the cytoplasm. It localises to the nucleus. It catalyses the reaction DNA(n) + a 2'-deoxyribonucleoside 5'-triphosphate = DNA(n+1) + diphosphate. It carries out the reaction Endonucleolytic cleavage to 5'-phosphomonoester.. Capsid protein (CA) is the structural component of the virus-like particle (VLP), forming the shell that encapsulates the retrotransposons dimeric RNA genome. The particles are assembled from trimer-clustered units and there are holes in the capsid shells that allow for the diffusion of macromolecules. CA also has nucleocapsid-like chaperone activity, promoting primer tRNA(i)-Met annealing to the multipartite primer-binding site (PBS), dimerization of Ty1 RNA and initiation of reverse transcription. Its function is as follows. The aspartyl protease (PR) mediates the proteolytic cleavages of the Gag and Gag-Pol polyproteins after assembly of the VLP. In terms of biological role, reverse transcriptase/ribonuclease H (RT) is a multifunctional enzyme that catalyzes the conversion of the retro-elements RNA genome into dsDNA within the VLP. The enzyme displays a DNA polymerase activity that can copy either DNA or RNA templates, and a ribonuclease H (RNase H) activity that cleaves the RNA strand of RNA-DNA heteroduplexes during plus-strand synthesis and hydrolyzes RNA primers. The conversion leads to a linear dsDNA copy of the retrotransposon that includes long terminal repeats (LTRs) at both ends. Functionally, integrase (IN) targets the VLP to the nucleus, where a subparticle preintegration complex (PIC) containing at least integrase and the newly synthesized dsDNA copy of the retrotransposon must transit the nuclear membrane. Once in the nucleus, integrase performs the integration of the dsDNA into the host genome. This chain is Transposon Ty1-ER1 Gag-Pol polyprotein (TY1B-ER1), found in Saccharomyces cerevisiae (strain ATCC 204508 / S288c) (Baker's yeast).